The chain runs to 752 residues: Photosystem I P700 chlorophyll a apoprotein A1 (752 aa).

Transmembrane regions (helical) follow at residues 73-96, 159-182, 198-222, 294-312, 349-372, 388-414, 436-458, and 533-551; these read IFSA…FHGA, LYWI…FHYH, MNHH…HIAL, IAHH…GHMY, WHAQ…HHMY, LSLF…IFMV, AIIS…LYIH, and FMVH…LILL. The [4Fe-4S] cluster site is built by cysteine 575 and cysteine 584. 2 helical membrane passes run 591 to 612 and 666 to 688; these read HVFL…HFSW and SSAY…MFLF. Histidine 677 serves as a coordination point for chlorophyll a'. The chlorophyll a site is built by methionine 685 and tyrosine 693. Tryptophan 694 contributes to the phylloquinone binding site. Residues 726-746 traverse the membrane as a helical segment; that stretch reads AVGLAHYLLGGIGTTWSFFLA.

Belongs to the PsaA/PsaB family. In terms of assembly, the PsaA/B heterodimer binds the P700 chlorophyll special pair and subsequent electron acceptors. PSI consists of a core antenna complex that captures photons, and an electron transfer chain that converts photonic excitation into a charge separation. The eukaryotic PSI reaction center is composed of at least 11 subunits. Requires P700 is a chlorophyll a/chlorophyll a' dimer, A0 is one or more chlorophyll a, A1 is one or both phylloquinones and FX is a shared 4Fe-4S iron-sulfur center. as cofactor.

Its subcellular location is the plastid. It is found in the chloroplast thylakoid membrane. It catalyses the reaction reduced [plastocyanin] + hnu + oxidized [2Fe-2S]-[ferredoxin] = oxidized [plastocyanin] + reduced [2Fe-2S]-[ferredoxin]. In terms of biological role, psaA and PsaB bind P700, the primary electron donor of photosystem I (PSI), as well as the electron acceptors A0, A1 and FX. PSI is a plastocyanin/cytochrome c6-ferredoxin oxidoreductase, converting photonic excitation into a charge separation, which transfers an electron from the donor P700 chlorophyll pair to the spectroscopically characterized acceptors A0, A1, FX, FA and FB in turn. Oxidized P700 is reduced on the lumenal side of the thylakoid membrane by plastocyanin or cytochrome c6. The sequence is that of Photosystem I P700 chlorophyll a apoprotein A1 from Trieres chinensis (Marine centric diatom).